The primary structure comprises 364 residues: Fructose-bisphosphate aldolase C (364 aa).

A Phosphotyrosine modification is found at tyrosine 5. Residues serine 36, serine 39, and serine 45 each carry the phosphoserine modification. Position 56 (arginine 56) interacts with substrate. An N6-acetyllysine modification is found at lysine 111. Phosphoserine is present on serine 132. Lysine 147 contributes to the substrate binding site. The active-site Proton acceptor is the glutamate 188. Lysine 230 functions as the Schiff-base intermediate with dihydroxyacetone-P in the catalytic mechanism.

Belongs to the class I fructose-bisphosphate aldolase family. In terms of assembly, homotetramer. Interacts with ATP6V1E1.

The catalysed reaction is beta-D-fructose 1,6-bisphosphate = D-glyceraldehyde 3-phosphate + dihydroxyacetone phosphate. It functions in the pathway carbohydrate degradation; glycolysis; D-glyceraldehyde 3-phosphate and glycerone phosphate from D-glucose: step 4/4. This chain is Fructose-bisphosphate aldolase C (ALDOC), found in Macaca fascicularis (Crab-eating macaque).